A 645-amino-acid chain; its full sequence is Beta-galactosidase (645 aa).

Arg102 contributes to the substrate binding site. Zn(2+) is bound at residue Cys106. Asn140 is a binding site for substrate. Glu141 (proton donor) is an active-site residue. Cys150, Cys152, and Cys155 together coordinate Zn(2+). Catalysis depends on Glu312, which acts as the Nucleophile. Substrate is bound by residues Trp320 and 360–363 (EQMH).

Belongs to the glycosyl hydrolase 42 family. Homotrimer.

It catalyses the reaction Hydrolysis of terminal non-reducing beta-D-galactose residues in beta-D-galactosides.. Inhibited by Cu(2+) and Fe(2+), and moderately activated by divalent cations such as Co(2+), Mn(2+) and Zn(2+). Considerably activated by dithiothreitol, beta-mercaptoethanol and cysteine. This Thermus thermophilus protein is Beta-galactosidase.